A 343-amino-acid chain; its full sequence is Diterpene cyclase DtcycB (343 aa).

Mg(2+) contacts are provided by Asn-219, Ser-223, and Glu-227.

Belongs to the terpene synthase family. As to quaternary structure, homodimer. Mg(2+) serves as cofactor.

The enzyme catalyses (2E,6E,10E)-geranylgeranyl diphosphate + H2O = (R)-nephthenol + diphosphate. It carries out the reaction (2E,6E,10E)-geranylgeranyl diphosphate = (R)-cembrene A + diphosphate. It catalyses the reaction (2E,6E,10E)-geranylgeranyl diphosphate + H2O = (1S,4E,8E,12E)-2,2,5,9,13-pentamethylcyclopentadeca-4,8,12-trien-1-ol + diphosphate. In terms of biological role, diterpene cyclases that can form multiple diterpene products. In Streptomyces sp, this protein is Diterpene cyclase DtcycB.